Reading from the N-terminus, the 405-residue chain is Insertion element IS110 uncharacterized 43.6 kDa protein (405 aa).

In Streptomyces coelicolor (strain ATCC BAA-471 / A3(2) / M145), this protein is Insertion element IS110 uncharacterized 43.6 kDa protein.